Reading from the N-terminus, the 510-residue chain is GMP synthase [glutamine-hydrolyzing] (510 aa).

A Glutamine amidotransferase type-1 domain is found at 5–195 (PILVVNFGSQ…IYGVCKAEKN (191 aa)). Cysteine 82 acts as the Nucleophile in catalysis. Residues histidine 169 and glutamate 171 contribute to the active site. Positions 196-385 (WEMGDFIHEK…LGVPEEILRR (190 aa)) constitute a GMPS ATP-PPase domain. 223–229 (SGGVDST) serves as a coordination point for ATP.

As to quaternary structure, homodimer.

The enzyme catalyses XMP + L-glutamine + ATP + H2O = GMP + L-glutamate + AMP + diphosphate + 2 H(+). Its pathway is purine metabolism; GMP biosynthesis; GMP from XMP (L-Gln route): step 1/1. Catalyzes the synthesis of GMP from XMP. The protein is GMP synthase [glutamine-hydrolyzing] (guaA) of Aquifex aeolicus (strain VF5).